The following is a 94-amino-acid chain: Acylphosphatase (94 aa).

In terms of domain architecture, Acylphosphatase-like spans 3–90 (RVHVIVEGRV…PDEKQFRIMY (88 aa)). Catalysis depends on residues Arg18 and Asn36.

Belongs to the acylphosphatase family.

The enzyme catalyses an acyl phosphate + H2O = a carboxylate + phosphate + H(+). This is Acylphosphatase (acyP) from Geobacillus thermodenitrificans (strain NG80-2).